We begin with the raw amino-acid sequence, 513 residues long: Maturase K (513 aa).

The protein belongs to the intron maturase 2 family. MatK subfamily.

The protein localises to the plastid. It localises to the chloroplast. Functionally, usually encoded in the trnK tRNA gene intron. Probably assists in splicing its own and other chloroplast group II introns. This Pinus parviflora (Japanese white pine) protein is Maturase K.